Here is a 190-residue protein sequence, read N- to C-terminus: Transcription termination/antitermination protein NusG (190 aa).

The 29-residue stretch at 138–166 folds into the KOW domain; sequence VGEIVTVTEGPFETFTGTVEEVDQEKARL.

It belongs to the NusG family.

Functionally, participates in transcription elongation, termination and antitermination. The chain is Transcription termination/antitermination protein NusG from Rickettsia bellii (strain RML369-C).